The primary structure comprises 291 residues: ATP synthase gamma chain (291 aa).

This sequence belongs to the ATPase gamma chain family. F-type ATPases have 2 components, CF(1) - the catalytic core - and CF(0) - the membrane proton channel. CF(1) has five subunits: alpha(3), beta(3), gamma(1), delta(1), epsilon(1). CF(0) has three main subunits: a, b and c.

It is found in the cell inner membrane. Functionally, produces ATP from ADP in the presence of a proton gradient across the membrane. The gamma chain is believed to be important in regulating ATPase activity and the flow of protons through the CF(0) complex. The protein is ATP synthase gamma chain of Sphingopyxis alaskensis (strain DSM 13593 / LMG 18877 / RB2256) (Sphingomonas alaskensis).